The primary structure comprises 66 residues: Conotoxin Cal6.38 (66 aa).

Positions 1 to 22 (MKLTFVLIVAVLVLAVCNFTVA) are cleaved as a signal peptide. Cystine bridges form between Cys38/Cys55, Cys45/Cys59, and Cys54/Cys64.

It belongs to the conotoxin O1 superfamily. As to expression, expressed by the venom duct.

It localises to the secreted. Its function is as follows. Probable neurotoxin. The chain is Conotoxin Cal6.38 from Californiconus californicus (California cone).